Reading from the N-terminus, the 252-residue chain is 5'-nucleotidase SurE (252 aa).

Asp-8, Asp-9, Ser-39, and Asn-91 together coordinate a divalent metal cation.

It belongs to the SurE nucleotidase family. Requires a divalent metal cation as cofactor.

The protein resides in the cytoplasm. It catalyses the reaction a ribonucleoside 5'-phosphate + H2O = a ribonucleoside + phosphate. Nucleotidase that shows phosphatase activity on nucleoside 5'-monophosphates. The protein is 5'-nucleotidase SurE of Geobacter metallireducens (strain ATCC 53774 / DSM 7210 / GS-15).